A 332-amino-acid chain; its full sequence is Galectin-4 (332 aa).

Galectin domains follow at residues 19–150 (YHNP…INFI) and 203–332 (FNGR…YVQI). 265 to 271 (WGSEERK) contacts a beta-D-galactoside. Phosphoserine is present on Ser267.

As to quaternary structure, monomer.

Functionally, galectin that binds lactose and a related range of sugars. May be involved in the assembly of adherens junctions. The chain is Galectin-4 (LGALS4) from Bos taurus (Bovine).